The sequence spans 1202 residues: Ribonuclease P protein component, mitochondrial (1202 aa).

The transit peptide at 1–122 (MAFKSFIYSK…NNNNNQHRYY (122 aa)) directs the protein to the mitochondrion. A disordered region spans residues 109–134 (NYVNNNNNNQHRYYSTGPTLPTNQYD). Residues 118 to 134 (QHRYYSTGPTLPTNQYD) are compositionally biased toward polar residues.

In terms of assembly, consists of an RNA moiety (RPM1) and the protein component (RPM2). Both are necessary for full enzymatic activity.

Its subcellular location is the mitochondrion. The enzyme catalyses Endonucleolytic cleavage of RNA, removing 5'-extranucleotides from tRNA precursor.. Functionally, ribonuclease P generates mature tRNA molecules by cleaving their 5'-ends. This chain is Ribonuclease P protein component, mitochondrial (RPM2), found in Saccharomyces cerevisiae (strain ATCC 204508 / S288c) (Baker's yeast).